The chain runs to 766 residues: 5-methyltetrahydropteroyltriglutamate--homocysteine methyltransferase (766 aa).

5-methyltetrahydropteroyltri-L-glutamate is bound by residues 16-19 (RELK) and Lys119. L-homocysteine is bound by residues 440–442 (IGS) and Glu493. L-methionine-binding positions include 440–442 (IGS) and Glu493. Residues 524 to 525 (RC) and Trp570 contribute to the 5-methyltetrahydropteroyltri-L-glutamate site. Residue Asp608 coordinates L-homocysteine. Asp608 contributes to the L-methionine binding site. Glu614 provides a ligand contact to 5-methyltetrahydropteroyltri-L-glutamate. 3 residues coordinate Zn(2+): His650, Cys652, and Glu674. Catalysis depends on His703, which acts as the Proton donor. Cys735 contacts Zn(2+).

Belongs to the vitamin-B12 independent methionine synthase family. Zn(2+) is required as a cofactor.

The catalysed reaction is 5-methyltetrahydropteroyltri-L-glutamate + L-homocysteine = tetrahydropteroyltri-L-glutamate + L-methionine. It functions in the pathway amino-acid biosynthesis; L-methionine biosynthesis via de novo pathway; L-methionine from L-homocysteine (MetE route): step 1/1. Its function is as follows. Catalyzes the transfer of a methyl group from 5-methyltetrahydrofolate to homocysteine resulting in methionine formation. The sequence is that of 5-methyltetrahydropteroyltriglutamate--homocysteine methyltransferase from Pseudomonas aeruginosa (strain UCBPP-PA14).